The following is a 454-amino-acid chain: Tryptophanase (454 aa).

Position 256 is an N6-(pyridoxal phosphate)lysine (Lys-256).

The protein belongs to the beta-eliminating lyase family. In terms of assembly, homotetramer. Requires pyridoxal 5'-phosphate as cofactor.

The catalysed reaction is L-tryptophan + H2O = indole + pyruvate + NH4(+). It functions in the pathway amino-acid degradation; L-tryptophan degradation via pyruvate pathway; indole and pyruvate from L-tryptophan: step 1/1. The polypeptide is Tryptophanase (tnaA) (Rhodobacter capsulatus (Rhodopseudomonas capsulata)).